The following is a 1179-amino-acid chain: Protein FAM83H (1179 aa).

Positions 1–286 (MARRSQSSSQ…LFAQSEPLVP (286 aa)) are DUF1669. Positions 1–286 (MARRSQSSSQ…LFAQSEPLVP (286 aa)) are mediates interaction with CSNK1A1 and is required for FAM83H activity in keratin cytoskeleton organization. Thr465 bears the Phosphothreonine mark. Disordered regions lie at residues 484–577 (ADPD…GRAG) and 636–669 (FPTK…DSFR). Residues Ser513, Ser514, Ser516, Ser523, Ser647, and Ser667 each carry the phosphoserine modification. Thr756 carries the phosphothreonine modification. A phosphoserine mark is found at Ser759, Ser785, and Ser813. The tract at residues 830 to 1026 (RLPSRFLSAQ…RGPRARLSSA (197 aa)) is disordered. Positions 836–847 (LSAQSHSTSPQG) are enriched in polar residues. Phosphoserine is present on residues Ser870 and Ser881. Thr883 carries the post-translational modification Phosphothreonine. Polar residues predominate over residues 884-906 (PGFSTRRGSPTTGFIEQKGSPTS). Ser892 is modified (phosphoserine). Thr894 carries the phosphothreonine modification. A phosphoserine mark is found at Ser903, Ser914, Ser925, Ser936, Ser945, Ser1003, Ser1009, Ser1024, and Ser1025. Thr1040 is subject to Phosphothreonine. Disordered regions lie at residues 1047-1084 (ISAH…APDM) and 1143-1165 (EEAS…SKVG). Ser1048, Ser1068, and Ser1147 each carry phosphoserine.

The protein belongs to the FAM83 family. In terms of assembly, directly interacts (via DUF1669) with casein kinase isoforms CSNK1A1, CSNK1A1L, CSNK1D and CSNK1E. Interaction with CSNK1A1 recruits CSNK1A1 to keratin filaments. Interacts with KRT18 and probably other keratins. Expressed in the tooth follicle.

It is found in the cytoplasm. The protein localises to the cytoskeleton. Its function is as follows. May play a major role in the structural organization and calcification of developing enamel. May play a role in keratin cytoskeleton disassembly by recruiting CSNK1A1 to keratin filaments. Thereby, it may regulate epithelial cell migration. In Homo sapiens (Human), this protein is Protein FAM83H.